The chain runs to 455 residues: MTTSSRTCPVPAVNGHMTHYPAAPYPLLFPPVIGGLSLPSLHGLQSHPPTSGCSTPSPATVETQSTSSEELVPSPPSPLPPPRVYKPCFVCQDKSSGYHYGVSACEGCKGFFRRSIQKNMVYTCHRDKNCVINKVTRNRCQYCRLQKCFEVGMSKESVRNDRNKKKKEPTKQESTENYEMTAELDDLTEKIRKAHQETFPSLCQLGKYTTNSSADHRVRLDLGLWDKFSELATKCIIKIVEFAKRLPGFTSLTIADQITLLKAACLDILILRICTRYTPEQDTMTFSDGLTLNRTQMHNAGFGPLTDLVFTFANQLLPLEMDDTETGLLSAICLICGDRQDLEEPMKVDKLQEPLLEALKIYIRKRRPNKPHMFPKILMKITDLRSISAKGAERVITLKMEIPGSMPPLIQEMLENSEGHEPLTPTSNGNTAEHSPSISPSSVDNSSVSQSPMVQ.

The segment at 1–87 is modulating; sequence MTTSSRTCPV…PLPPPRVYKP (87 aa). Residues 44-78 form a disordered region; that stretch reads LQSHPPTSGCSTPSPATVETQSTSSEELVPSPPSP. Residues 47-66 are compositionally biased toward polar residues; the sequence is HPPTSGCSTPSPATVETQST. 2 consecutive NR C4-type zinc fingers follow at residues 88-108 and 124-148; these read CFVC…CEGC and CHRD…LQKC. The nuclear receptor DNA-binding region spans 88–153; the sequence is CFVCQDKSSG…RLQKCFEVGM (66 aa). The interval 154–182 is hinge; the sequence is SKESVRNDRNKKKKEPTKQESTENYEMTA. One can recognise an NR LBD domain in the interval 183–417; that stretch reads ELDDLTEKIR…PLIQEMLENS (235 aa). Residues 416-455 form a disordered region; sequence NSEGHEPLTPTSNGNTAEHSPSISPSSVDNSSVSQSPMVQ. The segment covering 424–434 has biased composition (polar residues); sequence TPTSNGNTAEH. The span at 435–455 shows a compositional bias: low complexity; sequence SPSISPSSVDNSSVSQSPMVQ.

Belongs to the nuclear hormone receptor family. NR1 subfamily. In terms of assembly, heterodimer; with a RXR molecule. Binds DNA preferentially as a RAR/RXR heterodimer.

Its subcellular location is the nucleus. In terms of biological role, receptor for retinoic acid. Retinoic acid receptors bind as heterodimers to their target response elements in response to their ligands, all-trans or 9-cis retinoic acid, and regulate gene expression in various biological processes. The RAR/RXR heterodimers bind to the retinoic acid response elements (RARE) composed of tandem 5'-AGGTCA-3' sites known as DR1-DR5. Required for limb and craniofacial development. The sequence is that of Retinoic acid receptor beta (RARB) from Gallus gallus (Chicken).